The primary structure comprises 448 residues: Beclin-1 (448 aa).

Methionine 1 carries the post-translational modification N-acetylmethionine. Phosphoserine occurs at positions 14 and 29. The disordered stretch occupies residues 47–72 (TTAQAKPGESQEEEANSGEEPFIETR). Phosphoserine; by AMPK is present on residues serine 88, serine 91, and serine 94. Residues 106–125 (TMENLSRRLKVTGDLFDIMS) carry the BH3 motif. The segment at 110 to 157 (LSRRLKVTGDLFDIMSGQTDVDHPLCEECTDTLLDQLDTQLNVTENEC) is interaction with BCL2 and BCL2L1 isoform Bcl-X(L). Threonine 117 is subject to Phosphothreonine; by DAPK1. Residues 140–267 (DTLLDQLDTQ…QLDKLKKTNV (128 aa)) adopt a coiled-coil conformation. Positions 243–448 (DELKSVENQM…AWVSSQFYNK (206 aa)) are evolutionary conserved domain (ECD). Glycyl lysine isopeptide (Lys-Gly) (interchain with G-Cter in ubiquitin) cross-links involve residues lysine 400 and lysine 435. Residues 423–448 (WTKALKFMLTNLKWGLAWVSSQFYNK) form a required for membrane-association region.

It belongs to the beclin family. As to quaternary structure, a homodimeric form is proposed to exist; this metastable form readily transits to ATG14- or UVRAG-containing complexes with BECN1:UVRAG being more stable than BECN1:ATG14. Component of the PI3K (PI3KC3/PI3K-III/class III phosphatidylinositol 3-kinase) complex the core of which is composed of the catalytic subunit PIK3C3, the regulatory subunit PIK3R4 and BECN1 associating with additional regulatory/auxiliary subunits to form alternative complex forms. Alternative complex forms containing a fourth regulatory subunit in a mutually exclusive manner are PI3K complex I (PI3KC3-C1) containing ATG14, and PI3K complex II (PI3KC3-C2) containing UVRAG. PI3KC3-C1 displays a V-shaped architecture with PIK3R4 serving as a bridge between PIK3C3 and the ATG14:BECN1 subcomplex. Both, PI3KC3-C1 and PI3KC3-C2, can associate with further regulatory subunits, such as RUBCN, SH3GLB1/Bif-1 and AMBRA1. PI3KC3-C1 probably associates with PIK3CB. Forms a complex with PPP2CA and AMBRA1; AMBRA1 and BECN1 components of the complex regulate MYC stability via different pathways. Component of the complex, at least composed of LRPPRC, BECN1 and BCL2; the interactions prevent BECN1 from forming an autophagy-inducing complex with PIK3C3. Interacts with AMBRA1, GOPC, GRID2. Interacts with BCL2 and BCL2L1 isoform Bcl-X(L); the interaction inhibits BECN1 function in promoting autophagy by interfering with the formation of the PI3K complex. Interacts with cytosolic HMGB1; inhibits the interaction of BECN1 and BCL2 leading to promotion of autophagy. Interacts with USP10, USP13, DAPK1, RAB39A. Interacts with SLAMF1. Interacts with the poly-Gln domain of ATXN3; the interaction causes deubiquitination at Lys-400 and stabilizes BECN1. Interacts with VMP1. Interacts with TRIM5; the interaction causes activation of BECN1 by causing its dissociation from its inhibitors BCL2 and TAB2. Interacts with active ULK1 (phosphorylated on 'Ser-317') and MEFV simultaneously. Interacts with WDR81 and WDR91; negatively regulates the PI3 kinase/PI3K activity associated with endosomal membranes. Interacts with LAPTM4B; competes with EGFR for LAPTM4B binding; regulates EGFR activity. Interacts with TRIM50. Interacts with TRIM16. Interacts with ATG14; this interaction is increased in the absence of TMEM39A. Interacts with WASHC1; preventing interaction with AMBRA1 and the DCX(AMBRA1) complex and subsequent ubiquitination. Interacts with TRIM17. Interacts with BCL2L10/BCL-B (via BH1 domain). Interacts with SH3BGRL. Interacts with IRGM; enhancing BECN1-interacting partners and influencing the composition of the BECN1 complex. Interacts with ARMC3. Interacts with LRPPRC. Post-translationally, phosphorylation at Thr-117 by DAPK1 reduces its interaction with BCL2 and BCL2L1 and promotes induction of autophagy. In response to autophagic stimuli, phosphorylated at serine residues by AMPK in an ATG14-dependent manner, and this phosphorylation is critical for maximally efficient autophagy. In terms of processing, polyubiquitinated by NEDD4, both with 'Lys-11'- and 'Lys-63'-linkages. 'Lys-11'-linked polyubiquitination leads to degradation and is enhanced when the stabilizing interaction partner VPS34 is depleted. Deubiquitinated by USP10 and USP13, leading to stabilize the PIK3C3/VPS34-containing complexes. Polyubiquitinated at Lys-400 with 'Lys-48'-linkages. 'Lys-48'-linked polyubiquitination of Lys-400 leads to degradation. Deubiquitinated by ATXN3, leading to stabilization. Ubiquitinated at Lys-435 via 'Lys-63'-linkage by the DCX(AMBRA1) complex, thereby increasing the association between BECN1 and PIK3C3 to promote PIK3C3 activity. 'Lys-48'-linked ubiquitination by RNF216 leads to proteasomal degradation and autophagy inhibition. Proteolytically processed by caspases including CASP8 and CASP3; the C-terminal fragments lack autophagy-inducing capacity and are proposed to induce apoptosis. Thus the cleavage is proposed to be an determinant to switch from autophagy to apoptosis pathways affecting cellular homeostasis including viral infections and survival of tumor cells.

It is found in the cytoplasm. The protein resides in the golgi apparatus. It localises to the trans-Golgi network membrane. The protein localises to the endosome membrane. Its subcellular location is the endoplasmic reticulum membrane. It is found in the mitochondrion membrane. The protein resides in the cytoplasmic vesicle. It localises to the autophagosome. The protein localises to the mitochondrion. Its subcellular location is the nucleus. In terms of biological role, plays a central role in autophagy. Acts as a core subunit of the PI3K complex that mediates formation of phosphatidylinositol 3-phosphate; different complex forms are believed to play a role in multiple membrane trafficking pathways: PI3KC3-C1 is involved in initiation of autophagosomes and PI3KC3-C2 in maturation of autophagosomes and endocytosis. Involved in regulation of degradative endocytic trafficking and required for the abscission step in cytokinesis, probably in the context of PI3KC3-C2. Essential for the formation of PI3KC3-C2 but not PI3KC3-C1 PI3K complex forms. Involved in endocytosis. May play a role in antiviral host defense. Functionally, beclin-1-C 35 kDa localized to mitochondria can promote apoptosis; it induces the mitochondrial translocation of BAX and the release of proapoptotic factors. This is Beclin-1 (Becn1) from Rattus norvegicus (Rat).